The primary structure comprises 949 residues: Protein translocase subunit SecA (949 aa).

ATP contacts are provided by residues Gln-87, 105–109 (GEGKT), and Asp-524. 2 disordered regions span residues 852 to 876 (PPPG…SSGG) and 896 to 939 (LEFS…GSGK). Residues Cys-933, Cys-935, Cys-944, and His-945 each contribute to the Zn(2+) site.

Belongs to the SecA family. In terms of assembly, monomer and homodimer. Part of the essential Sec protein translocation apparatus which comprises SecA, SecYEG and auxiliary proteins SecDF-YajC and YidC. The cofactor is Zn(2+).

It localises to the cell inner membrane. The protein localises to the cytoplasm. The enzyme catalyses ATP + H2O + cellular proteinSide 1 = ADP + phosphate + cellular proteinSide 2.. Functionally, part of the Sec protein translocase complex. Interacts with the SecYEG preprotein conducting channel. Has a central role in coupling the hydrolysis of ATP to the transfer of proteins into and across the cell membrane, serving both as a receptor for the preprotein-SecB complex and as an ATP-driven molecular motor driving the stepwise translocation of polypeptide chains across the membrane. The protein is Protein translocase subunit SecA of Methylocella silvestris (strain DSM 15510 / CIP 108128 / LMG 27833 / NCIMB 13906 / BL2).